We begin with the raw amino-acid sequence, 545 residues long: Chaperonin GroEL (545 aa).

ATP is bound by residues 30-33 (TLGP), K51, 87-91 (DGTTT), G415, and D495.

Belongs to the chaperonin (HSP60) family. In terms of assembly, forms a cylinder of 14 subunits composed of two heptameric rings stacked back-to-back. Interacts with the co-chaperonin GroES.

It is found in the cytoplasm. The catalysed reaction is ATP + H2O + a folded polypeptide = ADP + phosphate + an unfolded polypeptide.. Its function is as follows. Together with its co-chaperonin GroES, plays an essential role in assisting protein folding. The GroEL-GroES system forms a nano-cage that allows encapsulation of the non-native substrate proteins and provides a physical environment optimized to promote and accelerate protein folding. The sequence is that of Chaperonin GroEL from Shewanella denitrificans (strain OS217 / ATCC BAA-1090 / DSM 15013).